The following is a 764-amino-acid chain: 5-methyltetrahydropteroyltriglutamate--homocysteine methyltransferase (764 aa).

5-methyltetrahydropteroyltri-L-glutamate contacts are provided by residues Arg-16–Lys-19 and Lys-115. L-homocysteine is bound by residues Ile-435–Ser-437 and Glu-488. Residues Ile-435–Ser-437 and Glu-488 contribute to the L-methionine site. Residues Arg-519–Cys-520 and Trp-565 contribute to the 5-methyltetrahydropteroyltri-L-glutamate site. Asp-603 is an L-homocysteine binding site. Position 603 (Asp-603) interacts with L-methionine. Glu-609 contacts 5-methyltetrahydropteroyltri-L-glutamate. Residues His-645, Cys-647, and Glu-669 each contribute to the Zn(2+) site. Catalysis depends on His-698, which acts as the Proton donor. Cys-730 is a binding site for Zn(2+).

This sequence belongs to the vitamin-B12 independent methionine synthase family. It depends on Zn(2+) as a cofactor.

It catalyses the reaction 5-methyltetrahydropteroyltri-L-glutamate + L-homocysteine = tetrahydropteroyltri-L-glutamate + L-methionine. The protein operates within amino-acid biosynthesis; L-methionine biosynthesis via de novo pathway; L-methionine from L-homocysteine (MetE route): step 1/1. Catalyzes the transfer of a methyl group from 5-methyltetrahydrofolate to homocysteine resulting in methionine formation. This is 5-methyltetrahydropteroyltriglutamate--homocysteine methyltransferase from Burkholderia mallei (strain NCTC 10247).